We begin with the raw amino-acid sequence, 434 residues long: GTPase Obg (434 aa).

Positions 2-160 constitute an Obg domain; that stretch reads PTFVDQTKIE…RVLRLELKLL (159 aa). The OBG-type G domain maps to 161 to 334; it reads ADVGLVGFPS…LMNDTATLVE (174 aa). GTP is bound by residues 167–174, 192–196, 214–217, 284–287, and 315–317; these read GFPSVGKS, FTTLT, DLPG, SQMD, and SSV. Mg(2+) contacts are provided by S174 and T194. Positions 356-434 constitute an OCT domain; sequence YKAPQKNEFT…IGKFVFEFVQ (79 aa).

It belongs to the TRAFAC class OBG-HflX-like GTPase superfamily. OBG GTPase family. As to quaternary structure, monomer. It depends on Mg(2+) as a cofactor.

Its subcellular location is the cytoplasm. Functionally, an essential GTPase which binds GTP, GDP and possibly (p)ppGpp with moderate affinity, with high nucleotide exchange rates and a fairly low GTP hydrolysis rate. Plays a role in control of the cell cycle, stress response, ribosome biogenesis and in those bacteria that undergo differentiation, in morphogenesis control. The polypeptide is GTPase Obg (Lactobacillus helveticus (strain DPC 4571)).